The sequence spans 139 residues: Putative pre-16S rRNA nuclease (139 aa).

Belongs to the YqgF nuclease family.

It is found in the cytoplasm. In terms of biological role, could be a nuclease involved in processing of the 5'-end of pre-16S rRNA. This Proteus mirabilis (strain HI4320) protein is Putative pre-16S rRNA nuclease.